The following is a 428-amino-acid chain: Glutamate-1-semialdehyde 2,1-aminomutase (428 aa).

Lysine 265 is modified (N6-(pyridoxal phosphate)lysine).

Belongs to the class-III pyridoxal-phosphate-dependent aminotransferase family. HemL subfamily. In terms of assembly, homodimer. It depends on pyridoxal 5'-phosphate as a cofactor.

The protein resides in the cytoplasm. It catalyses the reaction (S)-4-amino-5-oxopentanoate = 5-aminolevulinate. The protein operates within porphyrin-containing compound metabolism; protoporphyrin-IX biosynthesis; 5-aminolevulinate from L-glutamyl-tRNA(Glu): step 2/2. The chain is Glutamate-1-semialdehyde 2,1-aminomutase from Hamiltonella defensa subsp. Acyrthosiphon pisum (strain 5AT).